The following is a 300-amino-acid chain: Urease accessory protein UreD (300 aa).

This sequence belongs to the UreD family. In terms of assembly, ureD, UreF and UreG form a complex that acts as a GTP-hydrolysis-dependent molecular chaperone, activating the urease apoprotein by helping to assemble the nickel containing metallocenter of UreC. The UreE protein probably delivers the nickel.

Its subcellular location is the cytoplasm. Required for maturation of urease via the functional incorporation of the urease nickel metallocenter. The protein is Urease accessory protein UreD of Prochlorococcus marinus (strain AS9601).